Here is a 306-residue protein sequence, read N- to C-terminus: MLSNLPVIFLMGPTAAGKTALAISLCEHLNTEIISVDSALVYKGMDIGTAKPDASELARAPHHLIDLLDPSETYSVADFRRDAIIKIDEFHQQGKVPVLVGGTMLYFKALIDGLSPLPEANVEIRAELEAQAAQYGWPHLYQELVKIDPQAAQKMSENDSQRINRALEVYKLTGKTMTELQKQKQPVLPYTFHQFAIAPTQRSELHQRIEKRFKIMLEQGFENEVSTLYLRKDLHPNMPSIRCVGYRQMWDYLAGEIDHDEMVFRGIAATRQLAKRQLTWLRSWPDVTWLTTGDEENLHRVVSSLS.

12–19 (GPTAAGKT) contributes to the ATP binding site. Residue 14–19 (TAAGKT) coordinates substrate. Interaction with substrate tRNA regions lie at residues 37–40 (DSAL), 161–165 (QRINR), and 242–247 (RCVGYR).

Belongs to the IPP transferase family. Monomer. It depends on Mg(2+) as a cofactor.

It carries out the reaction adenosine(37) in tRNA + dimethylallyl diphosphate = N(6)-dimethylallyladenosine(37) in tRNA + diphosphate. In terms of biological role, catalyzes the transfer of a dimethylallyl group onto the adenine at position 37 in tRNAs that read codons beginning with uridine, leading to the formation of N6-(dimethylallyl)adenosine (i(6)A). This Pseudoalteromonas translucida (strain TAC 125) protein is tRNA dimethylallyltransferase.